The sequence spans 511 residues: Pickpocket protein 19 (511 aa).

The next 2 membrane-spanning stretches (helical) occupy residues 59 to 79 (LWLA…TVLM) and 471 to 491 (GIIS…LFVL).

This sequence belongs to the amiloride-sensitive sodium channel (TC 1.A.6) family. In terms of tissue distribution, expressed in the tracheal system. Expressed in the taste-sensing terminal organ of the larval head. In adults, expressed in hairs on the tibia, femur and wing margin, but not in hairs on the tarsi of the leg.

It localises to the membrane. Its function is as follows. Part of a complex that plays a role in tracheal liquid clearance. In both larvae and adults, contributes to the behavioral response to salt. Probable role in sodium transport. In Drosophila melanogaster (Fruit fly), this protein is Pickpocket protein 19 (ppk19).